We begin with the raw amino-acid sequence, 251 residues long: Small ribosomal subunit protein uS2 (251 aa).

This sequence belongs to the universal ribosomal protein uS2 family.

The protein is Small ribosomal subunit protein uS2 of Cereibacter sphaeroides (strain ATCC 17029 / ATH 2.4.9) (Rhodobacter sphaeroides).